Here is a 334-residue protein sequence, read N- to C-terminus: Heat-inducible transcription repressor HrcA (334 aa).

The protein belongs to the HrcA family.

Negative regulator of class I heat shock genes (grpE-dnaK-dnaJ and groELS operons). Prevents heat-shock induction of these operons. The protein is Heat-inducible transcription repressor HrcA of Acidovorax sp. (strain JS42).